A 374-amino-acid chain; its full sequence is uncharacterized protein (374 aa).

A disordered region spans residues 1-46 (MVNEEEKDLTAEGDSNNTGVSPDSIKNKTLDFYPKEKTTERKTRSR). A compositionally biased stretch (basic and acidic residues) spans 25 to 46 (IKNKTLDFYPKEKTTERKTRSR). A run of 6 helical transmembrane segments spans residues 70-90 (YAYI…FIAA), 127-147 (WVFY…KIGI), 153-173 (TIVY…IPVI), 199-219 (IWLF…YGLV), 242-262 (ISIA…MLAI), and 312-332 (YFFG…AITI).

This sequence to M.genitalium MG432 and MG443.

Its subcellular location is the cell membrane. This is an uncharacterized protein from Spiroplasma citri.